Consider the following 350-residue polypeptide: tRNA N6-adenosine threonylcarbamoyltransferase (350 aa).

Positions 117 and 121 each coordinate Fe cation. Residues 140–144, aspartate 173, glycine 186, and asparagine 277 contribute to the substrate site; that span reads LVSGG. Residue aspartate 305 participates in Fe cation binding.

It belongs to the KAE1 / TsaD family. Fe(2+) is required as a cofactor.

It localises to the cytoplasm. It catalyses the reaction L-threonylcarbamoyladenylate + adenosine(37) in tRNA = N(6)-L-threonylcarbamoyladenosine(37) in tRNA + AMP + H(+). Functionally, required for the formation of a threonylcarbamoyl group on adenosine at position 37 (t(6)A37) in tRNAs that read codons beginning with adenine. Is involved in the transfer of the threonylcarbamoyl moiety of threonylcarbamoyl-AMP (TC-AMP) to the N6 group of A37, together with TsaE and TsaB. TsaD likely plays a direct catalytic role in this reaction. The chain is tRNA N6-adenosine threonylcarbamoyltransferase from Novosphingobium aromaticivorans (strain ATCC 700278 / DSM 12444 / CCUG 56034 / CIP 105152 / NBRC 16084 / F199).